The chain runs to 227 residues: N-acetyltransferase family 8 member 7 (227 aa).

Helical transmembrane passes span 36–56 and 58–78; these read MLLLPRTLLLLLGVPLTLFLA and GSWLLVLLSILTLFLSLWFLA. Residues 61-220 form the N-acetyltransferase domain; sequence LLVLLSILTL…PMINLKYSLT (160 aa).

The protein belongs to the camello family.

Its subcellular location is the membrane. It catalyses the reaction L-lysyl-[protein] + acetyl-CoA = N(6)-acetyl-L-lysyl-[protein] + CoA + H(+). Functionally, has histone acetyltransferase activity in vitro, with specificity for histone H4. This Mus musculus (Mouse) protein is N-acetyltransferase family 8 member 7.